A 404-amino-acid polypeptide reads, in one-letter code: uncharacterized protein (404 aa).

2 disordered regions span residues 261–307 and 320–340; these read VSTG…SPSL and KKSH…GGAD. Phosphoserine occurs at positions 267, 276, and 279. Residues threonine 290 and threonine 293 each carry the phosphothreonine modification. Phosphoserine occurs at positions 304, 306, 324, 358, and 362. The span at 320–336 shows a compositional bias: basic and acidic residues; sequence KKSHSANDSEEFFREDD.

This is an uncharacterized protein from Homo sapiens (Human).